The chain runs to 124 residues: Holo-[acyl-carrier-protein] synthase (124 aa).

Mg(2+) contacts are provided by D8 and E56.

The protein belongs to the P-Pant transferase superfamily. AcpS family. It depends on Mg(2+) as a cofactor.

The protein resides in the cytoplasm. The catalysed reaction is apo-[ACP] + CoA = holo-[ACP] + adenosine 3',5'-bisphosphate + H(+). Its function is as follows. Transfers the 4'-phosphopantetheine moiety from coenzyme A to a Ser of acyl-carrier-protein. The sequence is that of Holo-[acyl-carrier-protein] synthase from Clostridium acetobutylicum (strain ATCC 824 / DSM 792 / JCM 1419 / IAM 19013 / LMG 5710 / NBRC 13948 / NRRL B-527 / VKM B-1787 / 2291 / W).